The primary structure comprises 180 residues: GTP cyclohydrolase 1 (180 aa).

Residues cysteine 71, histidine 74, and cysteine 142 each coordinate Zn(2+).

This sequence belongs to the GTP cyclohydrolase I family. Homomer.

It catalyses the reaction GTP + H2O = 7,8-dihydroneopterin 3'-triphosphate + formate + H(+). It functions in the pathway cofactor biosynthesis; 7,8-dihydroneopterin triphosphate biosynthesis; 7,8-dihydroneopterin triphosphate from GTP: step 1/1. This is GTP cyclohydrolase 1 from Helicobacter pylori (strain P12).